Here is a 232-residue protein sequence, read N- to C-terminus: MKTLVICSGGLDSVSLAHKMAAEHELTGLLSFDYGQRHKKELDFAQACAKRLGVPHQIIDIRTIGASLTGSALTDDVDVPDGHYAEETMKVTVVPNRNAIMLVIAFGVAAAQKADAVALAVHGGDHFIYPDCRPGFIEAFQTMQKHALDGYADVKLLAPYVHATKADIVADGAKYRTPFEATWSCYKGADRHCGRCGTCVERREAFHLAGIDDPTSYEDADFWRATTQKRNA.

Position 7–17 (7–17) interacts with ATP; that stretch reads CSGGLDSVSLA. 4 residues coordinate Zn(2+): Cys-185, Cys-193, Cys-196, and Cys-199.

This sequence belongs to the QueC family. Zn(2+) is required as a cofactor.

It catalyses the reaction 7-carboxy-7-deazaguanine + NH4(+) + ATP = 7-cyano-7-deazaguanine + ADP + phosphate + H2O + H(+). It functions in the pathway purine metabolism; 7-cyano-7-deazaguanine biosynthesis. Catalyzes the ATP-dependent conversion of 7-carboxy-7-deazaguanine (CDG) to 7-cyano-7-deazaguanine (preQ(0)). This chain is 7-cyano-7-deazaguanine synthase, found in Brucella canis (strain ATCC 23365 / NCTC 10854 / RM-666).